The chain runs to 113 residues: uncharacterized protein (113 aa).

To M.jannaschii MJ0886 C-terminal region.

This is an uncharacterized protein from Clostridium pasteurianum.